The sequence spans 306 residues: Pantothenate kinase (306 aa).

Residue 90–97 (GSVAVGKS) participates in ATP binding.

It belongs to the prokaryotic pantothenate kinase family.

It localises to the cytoplasm. The catalysed reaction is (R)-pantothenate + ATP = (R)-4'-phosphopantothenate + ADP + H(+). The protein operates within cofactor biosynthesis; coenzyme A biosynthesis; CoA from (R)-pantothenate: step 1/5. In Lactococcus lactis subsp. cremoris (strain MG1363), this protein is Pantothenate kinase.